A 397-amino-acid chain; its full sequence is Phosphoglycerate kinase (397 aa).

Residues 21-23 (DMN), R36, 59-62 (HLGR), R114, and R147 contribute to the substrate site. ATP-binding positions include K198, E320, and 346–349 (GGDT).

Belongs to the phosphoglycerate kinase family. In terms of assembly, monomer.

It is found in the cytoplasm. The catalysed reaction is (2R)-3-phosphoglycerate + ATP = (2R)-3-phospho-glyceroyl phosphate + ADP. It participates in carbohydrate degradation; glycolysis; pyruvate from D-glyceraldehyde 3-phosphate: step 2/5. In Neisseria gonorrhoeae (strain NCCP11945), this protein is Phosphoglycerate kinase.